Consider the following 261-residue polypeptide: 3-methyl-2-oxobutanoate hydroxymethyltransferase (261 aa).

Mg(2+)-binding residues include Asp42 and Asp81. 3-methyl-2-oxobutanoate is bound by residues 42–43 (DS), Asp81, and Lys110. Glu112 is a binding site for Mg(2+). The active-site Proton acceptor is the Glu179.

The protein belongs to the PanB family. As to quaternary structure, homodecamer; pentamer of dimers. The cofactor is Mg(2+).

Its subcellular location is the cytoplasm. The enzyme catalyses 3-methyl-2-oxobutanoate + (6R)-5,10-methylene-5,6,7,8-tetrahydrofolate + H2O = 2-dehydropantoate + (6S)-5,6,7,8-tetrahydrofolate. The protein operates within cofactor biosynthesis; coenzyme A biosynthesis. In terms of biological role, catalyzes the reversible reaction in which hydroxymethyl group from 5,10-methylenetetrahydrofolate is transferred onto alpha-ketoisovalerate to form ketopantoate. The protein is 3-methyl-2-oxobutanoate hydroxymethyltransferase of Pyrobaculum neutrophilum (strain DSM 2338 / JCM 9278 / NBRC 100436 / V24Sta) (Thermoproteus neutrophilus).